Here is a 198-residue protein sequence, read N- to C-terminus: Dynein axonemal light chain 1 (198 aa).

LRR repeat units lie at residues 49 to 70 (ACKHLALSTNNIEKISSLSGME), 71 to 92 (NLRILSLGRNLIKKIENLDAVA), 94 to 115 (TLEELWISYNQIASLSGIEKLV), and 116 to 137 (NLRVLYMSNNKITNWGEIDKLA). The region spanning 157–195 (KENNATSEYRIEVVKRLPNLKKLDGMPVDVDEREQANVA) is the LRRCT domain.

The protein belongs to the dynein light chain LC1-type family. Interacts with OCAD2, a outer arm dynein heavy chain. Interacts with tubulin (previously called p45) located within the A-tubule of the outer doublets in a ATP-independent manner.

The protein localises to the cytoplasm. It localises to the cytoskeleton. The protein resides in the flagellum axoneme. Its function is as follows. Part of the multisubunit axonemal ATPase complexes that generate the force for flagellar motility and govern beat frequency. Component of the outer arm dynein (ODA). May be involved in a mechanosensory feedback mechanism controlling ODA activity based on external conformational cues by tethering the outer arm dynein heavy chain (ODA2) to the A-tubule of the outer doublet microtubules within the axoneme. This is Dynein axonemal light chain 1 from Chlamydomonas reinhardtii (Chlamydomonas smithii).